Here is a 329-residue protein sequence, read N- to C-terminus: DNA-directed RNA polymerase subunit alpha (329 aa).

Positions 1–235 (MQGSVTEFLK…EQLEAFVDLR (235 aa)) are alpha N-terminal domain (alpha-NTD). The alpha C-terminal domain (alpha-CTD) stretch occupies residues 249–329 (FDPILLRPVD…NWPPASIADE (81 aa)).

This sequence belongs to the RNA polymerase alpha chain family. Homodimer. The RNAP catalytic core consists of 2 alpha, 1 beta, 1 beta' and 1 omega subunit. When a sigma factor is associated with the core the holoenzyme is formed, which can initiate transcription.

The enzyme catalyses RNA(n) + a ribonucleoside 5'-triphosphate = RNA(n+1) + diphosphate. In terms of biological role, DNA-dependent RNA polymerase catalyzes the transcription of DNA into RNA using the four ribonucleoside triphosphates as substrates. This is DNA-directed RNA polymerase subunit alpha from Enterobacter sp. (strain 638).